The chain runs to 269 residues: Ribosomal RNA small subunit methyltransferase A (269 aa).

The S-adenosyl-L-methionine site is built by Asn11, Leu13, Gly37, Glu57, Asp85, and Asn104.

It belongs to the class I-like SAM-binding methyltransferase superfamily. rRNA adenine N(6)-methyltransferase family. RsmA subfamily.

The protein resides in the cytoplasm. The enzyme catalyses adenosine(1518)/adenosine(1519) in 16S rRNA + 4 S-adenosyl-L-methionine = N(6)-dimethyladenosine(1518)/N(6)-dimethyladenosine(1519) in 16S rRNA + 4 S-adenosyl-L-homocysteine + 4 H(+). Specifically dimethylates two adjacent adenosines (A1518 and A1519) in the loop of a conserved hairpin near the 3'-end of 16S rRNA in the 30S particle. May play a critical role in biogenesis of 30S subunits. The chain is Ribosomal RNA small subunit methyltransferase A from Campylobacter hominis (strain ATCC BAA-381 / DSM 21671 / CCUG 45161 / LMG 19568 / NCTC 13146 / CH001A).